Here is a 513-residue protein sequence, read N- to C-terminus: cAMP-regulated M3R protein (513 aa).

The protein to D.discoideum protein M3L.

The protein is cAMP-regulated M3R protein (prtB) of Dictyostelium discoideum (Social amoeba).